The following is a 1151-amino-acid chain: Protein kinase C-like 1 (1151 aa).

REM-1 domains are found at residues 1–67 and 106–183; these read MSFS…KTAQ and KYDC…INVD. A disordered region spans residues 64 to 88; it reads KTAQQSQGENGSEDNERCNSKEYGF. The 120-residue stretch at 190 to 309 folds into the C2 domain; it reads QPNDIMDNQQ…IRKKKAGQTN (120 aa). The residue at position 226 (Ser-226) is a Phosphoserine. The interval 306–331 is disordered; the sequence is GQTNEQQGWVNASNINGGSSLASEEG. Phorbol-ester/DAG-type zinc fingers lie at residues 414–461 and 481–531; these read GHHF…VTKC and PHRF…PDFC. Disordered stretches follow at residues 546–620 and 649–669; these read QDTK…IIDK and AQQTAEFSSPEKTLDPTSNRR. Positions 560-577 are enriched in polar residues; the sequence is PSAQLGSSIGTANGSDLS. The segment covering 605 to 620 has biased composition (basic and acidic residues); that stretch reads VGRDSPTKQHDPIIDK. Residue Ser-761 is modified to Phosphoserine. Residues 782–816 form a disordered region; it reads LAPTSTHASRTTDQQSPQKSQTSTSAKHKKRAAKR. The span at 792 to 806 shows a compositional bias: low complexity; the sequence is TTDQQSPQKSQTSTS. Basic residues predominate over residues 807–816; it reads AKHKKRAAKR. A Protein kinase domain is found at 824 to 1083; the sequence is FVLLKVLGKG…ADEVMEEPFF (260 aa). Residues 830-838 and Lys-853 each bind ATP; that span reads LGKGNFGKV. The Proton acceptor role is filled by Asp-949. Residues 1084 to 1151 form the AGC-kinase C-terminal domain; the sequence is RNINFDDILN…FSFMPDDLDL (68 aa).

This sequence belongs to the protein kinase superfamily. AGC Ser/Thr protein kinase family. PKC subfamily.

The enzyme catalyses L-seryl-[protein] + ATP = O-phospho-L-seryl-[protein] + ADP + H(+). It catalyses the reaction L-threonyl-[protein] + ATP = O-phospho-L-threonyl-[protein] + ADP + H(+). Required for cell growth and for the G2-&gt;M transition of the cell division cycle. Mediates a protein kinase cascade; it activates BCK1 which itself activates MKK1/MKK2. In Saccharomyces cerevisiae (strain ATCC 204508 / S288c) (Baker's yeast), this protein is Protein kinase C-like 1 (PKC1).